The sequence spans 382 residues: S-adenosylmethionine synthase (382 aa).

Residue H14 participates in ATP binding. D16 serves as a coordination point for Mg(2+). E42 lines the K(+) pocket. Residues E55 and Q91 each contribute to the L-methionine site. Positions 91–101 (QSENIAMGVNL) are flexible loop. Residues 156–158 (DMK), 222–223 (KF), D231, 237–238 (RK), A254, and K258 each bind ATP. D231 is an L-methionine binding site. L-methionine is bound at residue K262.

It belongs to the AdoMet synthase family. As to quaternary structure, homotetramer; dimer of dimers. Requires Mg(2+) as cofactor. K(+) is required as a cofactor.

Its subcellular location is the cytoplasm. It carries out the reaction L-methionine + ATP + H2O = S-adenosyl-L-methionine + phosphate + diphosphate. The protein operates within amino-acid biosynthesis; S-adenosyl-L-methionine biosynthesis; S-adenosyl-L-methionine from L-methionine: step 1/1. Functionally, catalyzes the formation of S-adenosylmethionine (AdoMet) from methionine and ATP. The overall synthetic reaction is composed of two sequential steps, AdoMet formation and the subsequent tripolyphosphate hydrolysis which occurs prior to release of AdoMet from the enzyme. The protein is S-adenosylmethionine synthase of Mycoplasmopsis synoviae (strain 53) (Mycoplasma synoviae).